A 107-amino-acid polypeptide reads, in one-letter code: U1-lycotoxin-Ls1p (107 aa).

An N-terminal signal peptide occupies residues 1–20; the sequence is MMKVLVVVALLVTLISYSSS. A propeptide spanning residues 21-41 is cleaved from the precursor; that stretch reads EGIDDLEADELLSLMANEQTR. Intrachain disulfides connect Cys44–Cys59, Cys51–Cys68, Cys58–Cys86, and Cys70–Cys84.

It belongs to the neurotoxin 19 (CSTX) family. 04 (U1-Lctx) subfamily. Expressed by the venom gland.

It is found in the secreted. The polypeptide is U1-lycotoxin-Ls1p (Lycosa singoriensis (Wolf spider)).